A 359-amino-acid polypeptide reads, in one-letter code: E3 ubiquitin-protein ligase RNF146 (359 aa).

The RING-type zinc finger occupies 36–74; that stretch reads CAICLQTCVHPVSLPCKHVFCYLCVKGASWLGKRCALCR. Residues Lys84 and Lys94 each participate in a glycyl lysine isopeptide (Lys-Gly) (interchain with G-Cter in ubiquitin) cross-link. One can recognise a WWE domain in the interval 91–167; sequence EELKAASRGN…EHGRRRKIKR (77 aa). 3 residues coordinate a glycoprotein: Tyr107, Arg110, and Trp114. A Glycyl lysine isopeptide (Lys-Gly) (interchain with G-Cter in ubiquitin) cross-link involves residue Lys130. Positions 144, 153, 163, and 175 each coordinate a glycoprotein. Residue Lys175 forms a Glycyl lysine isopeptide (Lys-Gly) (interchain with G-Cter in ubiquitin) linkage. Residues 259–359 are disordered; the sequence is ERSHRGEGEE…PDGQCTVTEV (101 aa). The span at 284–298 shows a compositional bias: acidic residues; that stretch reads SVEETESDASSDSED. A phosphoserine mark is found at Ser290 and Ser294. A compositionally biased stretch (polar residues) spans 306 to 322; it reads HSLTQQRLLVPNANQTV.

In terms of assembly, can form homooligomers. Interacts with PARsylated AXIN1, AXIN2, BLZF1, CASC3, H1-2, IPO7, LIG3, NCL, PARP1, XRCC1, XRCC5 and XRCC6. Interacts with DDB1, DHX15, IQGAP1, LRPPRC, PARP2, PRKDC, RUVBL2, TNKS1 and TNKS2. Binding often leads to interactor ubiquitination, in the presence of the appropriate E1 and E2 enzymes, and proteasomal degradation. Ubiquitinated; autoubiquitinated. Autoubiquitination is enhanced upon poly(ADP-ribose)-binding.

The protein resides in the cytoplasm. It is found in the cytosol. Its subcellular location is the nucleus. It catalyses the reaction S-ubiquitinyl-[E2 ubiquitin-conjugating enzyme]-L-cysteine + [acceptor protein]-L-lysine = [E2 ubiquitin-conjugating enzyme]-L-cysteine + N(6)-ubiquitinyl-[acceptor protein]-L-lysine.. The protein operates within protein modification; protein ubiquitination. Its function is as follows. E3 ubiquitin-protein ligase that specifically binds poly-ADP-ribosylated (PARsylated) proteins and mediates their ubiquitination and subsequent degradation. May regulate many important biological processes, such as cell survival and DNA damage response. Acts as an activator of the Wnt signaling pathway by mediating the ubiquitination of PARsylated AXIN1 and AXIN2, 2 key components of the beta-catenin destruction complex. Acts in cooperation with tankyrase proteins (TNKS and TNKS2), which mediate PARsylation of target proteins AXIN1, AXIN2, BLZF1, CASC3, TNKS and TNKS2. Recognizes and binds tankyrase-dependent PARsylated proteins via its WWE domain and mediates their ubiquitination, leading to their degradation. Different ubiquitin linkage types have been observed: TNKS2 undergoes ubiquitination at 'Lys-48' and 'Lys-63', while AXIN1 is only ubiquitinated at 'Lys-48'. May regulate TNKS and TNKS2 subcellular location, preventing aggregation at a centrosomal location. Neuroprotective protein. Protects the brain against N-methyl-D-aspartate (NMDA) receptor-mediated glutamate excitotoxicity and ischemia, by interfering with PAR-induced cell death, called parthanatos. Prevents nuclear translocation of AIFM1 in a PAR-binding dependent manner. Does not affect PARP1 activation. Protects against cell death induced by DNA damaging agents, such as N-methyl-N-nitro-N-nitrosoguanidine (MNNG) and rescues cells from G1 arrest. Promotes cell survival after gamma-irradiation. Facilitates DNA repair. The chain is E3 ubiquitin-protein ligase RNF146 (RNF146) from Ailuropoda melanoleuca (Giant panda).